A 1564-amino-acid polypeptide reads, in one-letter code: TRKRFLKLKYYSIILQSRIRMIIAVTSYKRYLWATVTIQRHWRAYLRRKQDQQRYEMLKSSSLIIQAMFRRWKQRKMQLQVKATITLQRAFREWHLRKRAKEEKSAIVIQSWYRMHKQLRKYVYVRSCVVIIQKRFRCFQAQRLYKRKRESILTIQKYYRAYLKGKIERIHYLQKRAAAIQLQAAFKILKAHNLHRPIRAACVIQSYWRMRQDRVRFLNLKKNIIKLQAHVRKHQQLQKYKKIKKAAVIIQTHFQAYIFARKVLASYQKTRSAVIVLQSAYRGMQARKMYIHILTSVIKIQSYYRAYVSKKEFLSLKNATIKLQSIVKMKQTRKQYVHLRATALFIQQCYHSKKLAAQKREEYMQMRESCIKLQAFVRGYLVRKQIRLQRKAVISLQSYFRMRKARQYYLKMYKAVIIIQNYYHSYKAQVNQRKNFLRVKKAATCLQAAYRGYKVRQLIKQQSVAAVKIQSAFRGYSKRVKYLSVLQSIIKIQRWYRAYKTLYDIRTRFLKAKAAVISLQSAYRGWKVRKQIRREHQAAMKIQSAFRMAKAQKQFRLFKTAALVIQQHLRAWIAGRKQRMEYIELRHSVLMLQSMWKGKTLRRDLQRQHTCAVIIQSYYRMHVQQKKWKIMKEAALLIQKYYRACRIGREQHCLYLETKAAVLTLQSAYRGMKVRKRIKACNTAAITIQSKYRAYKTKKKYAAYRASAIIIQRWYRGIKITNHQYKEYLNLKKTAIKIQAVYRGIRVRRHIQHMHRAATFIKAMFKMHQPRIRYHTMRKATIVIQVRYRAYHQGKMQRENYLKILKAVNILQANFRGVRVRRTLRKLRIAATLIQSNYRRYRQQTYFNKLKKITRTVQQRYRAVKERNIQFQRYNKLRHSVIYIQALFRGMKARRHLKTMHIAATLIQRRFRALMLRRRFLSLKKTAIWIQRKYRAHLRTKRHLQFLRLQNAAIKIQSSYRRWMIRKKMREMHRAAAFIQATFRMHRVHMRYHALKQASVVIQQRYQANRAAKLQRQHYLRQRYSAVILQAAFRGMKTRRHLKSMYFSAILIQSRFRSLLVRRRFISLKKAAIFIQRKYRATICAKHKLRQFLQLRKAAITIQSSYRRLMVKKKLQEMHRAAVLIQATFRMHRTHITFQTWKHASILIQQHYRTYRASKLQRENYTKQWHSAVIIQAAYRGMKARQLLREKHKAAIIIQSTYRMYRQYCLYQKLQWATKIIQEKYRADKKKHKALQHTELRKAETCVQASFQDVNIEKLIQEQHQTSIIIQKHCKAFKIKKHYLHLRAPVVSIQRRYGKLTAVHTQAVICIQSYYRGFKVRRDIQNMHLAATRIQSFYRMHRAKVHYQTKKTAIVIIQNYYRLYVRVKTERKSFLAVQKSVRTIQAAFRGMKVRQKLKNIPKEKMAAIVDQSALYCYRSKGQDEAVRSEGVIIQEWCKASCLACSQEEYHSQSRAAVTIQKAFRRMITRKLETQKCATLRIQSFLRMAVYRRRRANSVQQKRAAVTLQHYFRMWQTRKQFLLYRKAAVVLQNHYRAFLSGKHQRQVYLQIRSSVIIIQARIKGF.

IQ domains lie at Y31 to S60, L220 to Q251, T270 to K299, I293 to K322, M366 to S395, Q389 to Q420, V439 to K468, Q462 to K491, A512 to K541, E535 to Q566, Q608 to Q639, T658 to T687, C681 to Q712, L731 to K762, M754 to Q785, I804 to Q835, L827 to T856, L877 to Q908, M900 to Q931, L949 to Q980, M972 to Q1003, Q1022 to Q1053, M1045 to Q1076, L1095 to Q1126, Q1168 to Q1199, H1304 to R1333, M1327 to Q1358, V1377 to A1406, Q1452 to S1483, Q1474 to A1503, and Q1500 to Q1531.

The protein localises to the cytoplasm. It localises to the nucleus. In terms of biological role, probable role in mitotic spindle regulation and coordination of mitotic processes. May have a preferential role in regulating neurogenesis. The protein is Abnormal spindle-like microcephaly-associated protein homolog (ASPM) of Ateles geoffroyi (Black-handed spider monkey).